A 571-amino-acid polypeptide reads, in one-letter code: OTU domain-containing protein 5 (571 aa).

2 disordered regions span residues 1 to 111 (MTIL…GPGG) and 146 to 175 (PGHS…GAGY). Over residues 11 to 30 (PPDADPANEPPPPGPMPPAP) the composition is skewed to pro residues. Gly residues predominate over residues 32–47 (RGGGVGVGGGGTGVGG). Positions 63-75 (ASPPPQGPLPGPP) are enriched in pro residues. S64 bears the Phosphoserine mark. Positions 84–97 (AVPPGAVAGPRPQQ) are enriched in low complexity. Phosphoserine is present on S165. Residue Y175 is modified to Phosphotyrosine. A Phosphoserine modification is found at S177. T195 is subject to Phosphothreonine. The OTU domain occupies 213–341 (FIIKQMKEDG…NIHYNSVVNP (129 aa)). The cys-loop stretch occupies residues 218 to 224 (MKEDGAC). D221 is an active-site residue. The active-site Nucleophile is C224. Residues 273-283 (KRKNNCHGNHI) form a variable-loop region. Residue S328 is modified to Phosphoserine; by MTOR. The interval 329 to 334 (YHRNIH) is his-loop. H334 is a catalytic residue. S337 and S375 each carry phosphoserine. The segment at 418-502 (ARQVRGPSQP…PGTSSQFSAG (85 aa)) is disordered. Low complexity-rich tracts occupy residues 430–443 (ASAT…AASS) and 450–462 (SRSP…ASSP). S452 carries the phosphoserine modification. T507 is subject to Phosphothreonine. A Phosphoserine; by MTOR modification is found at S508.

Belongs to the peptidase C85 family. As to quaternary structure, interacts with TRAF3. Phosphorylation at Ser-177 is required for deubiquitinating activity. Phosphorylation at Ser-328, Ser-337 and Ser-508 by MTOR promotes its activity. In terms of tissue distribution, expressed in various tissues, including the liver and placenta, as well as in peripheral blood leukocytes.

The protein resides in the nucleus. It catalyses the reaction Thiol-dependent hydrolysis of ester, thioester, amide, peptide and isopeptide bonds formed by the C-terminal Gly of ubiquitin (a 76-residue protein attached to proteins as an intracellular targeting signal).. Inhibited by N-ethyl-maleimide (NEM). Deubiquitinating enzyme that functions as a negative regulator of the innate immune system. Has peptidase activity towards 'Lys-48'- and 'Lys-63'-linked polyubiquitin chains. Can also cleave 'Lys-11'-linked ubiquitin chains (in vitro). Acts via TRAF3 deubiquitination and subsequent suppression of type I interferon (IFN) production. Controls neuroectodermal differentiation through cleaving 'Lys-48'-linked ubiquitin chains to counteract degradation of select chromatin regulators such as ARID1A, HDAC2 and HCF1. Acts as a positive regulator of mTORC1 and mTORC2 signaling following phosphorylation by MTOR: acts by mediating deubiquitination of BTRC, leading to its stability. The protein is OTU domain-containing protein 5 of Homo sapiens (Human).